Here is a 156-residue protein sequence, read N- to C-terminus: MGRSISVSFGLLVVFLSLSGTGADQDCLPGWSSHEGHCYKVFNLDKTWEDAEKFCTEQANSGHLVSIDSKKEANFVAELVSQNIKETRRTDFVWIGLRAEDKRQHCSSEWSDGSSINYQNWIEAESKKCLGLEKQTRYRKWVNLNCGKPYRFTCEI.

The first 23 residues, 1 to 23 (MGRSISVSFGLLVVFLSLSGTGA), serve as a signal peptide directing secretion. Cystine bridges form between Cys-27-Cys-38, Cys-55-Cys-154, and Cys-129-Cys-146. The region spanning 34-155 (HEGHCYKVFN…CGKPYRFTCE (122 aa)) is the C-type lectin domain.

It belongs to the snaclec family. Heterodimer; disulfide-linked. As to expression, expressed by the venom gland.

The protein resides in the secreted. Its function is as follows. Interferes with one step of hemostasis (modulation of platelet aggregation, or coagulation cascade, for example). The protein is Snaclec A5 of Macrovipera lebetinus (Levantine viper).